The primary structure comprises 363 residues: 3-dehydroquinate synthase (363 aa).

NAD(+) is bound by residues 75 to 80 (DAEEGK), 109 to 113 (GAVTD), 133 to 134 (TS), Lys146, Lys155, and 173 to 176 (TLQT). The Zn(2+) site is built by Glu188, His251, and His267.

Belongs to the sugar phosphate cyclases superfamily. Dehydroquinate synthase family. Co(2+) is required as a cofactor. It depends on Zn(2+) as a cofactor. Requires NAD(+) as cofactor.

The protein localises to the cytoplasm. The enzyme catalyses 7-phospho-2-dehydro-3-deoxy-D-arabino-heptonate = 3-dehydroquinate + phosphate. It participates in metabolic intermediate biosynthesis; chorismate biosynthesis; chorismate from D-erythrose 4-phosphate and phosphoenolpyruvate: step 2/7. In terms of biological role, catalyzes the conversion of 3-deoxy-D-arabino-heptulosonate 7-phosphate (DAHP) to dehydroquinate (DHQ). This chain is 3-dehydroquinate synthase, found in Paenarthrobacter aurescens (strain TC1).